We begin with the raw amino-acid sequence, 404 residues long: Argininosuccinate synthase (404 aa).

Residues 10–18 (AFSGGLDTS) and Ala37 contribute to the ATP site. The L-citrulline site is built by Tyr88 and Ser93. Gly118 is an ATP binding site. L-aspartate is bound by residues Thr120, Asn124, and Asp125. L-citrulline is bound at residue Asn124. L-citrulline is bound by residues Arg128, Ser179, Ser188, Glu264, and Tyr276.

This sequence belongs to the argininosuccinate synthase family. Type 1 subfamily. In terms of assembly, homotetramer.

The protein localises to the cytoplasm. It catalyses the reaction L-citrulline + L-aspartate + ATP = 2-(N(omega)-L-arginino)succinate + AMP + diphosphate + H(+). It participates in amino-acid biosynthesis; L-arginine biosynthesis; L-arginine from L-ornithine and carbamoyl phosphate: step 2/3. The chain is Argininosuccinate synthase from Nitrosomonas eutropha (strain DSM 101675 / C91 / Nm57).